Reading from the N-terminus, the 173-residue chain is Mesencephalic astrocyte-derived neurotrophic factor homolog (173 aa).

A signal peptide spans 1 to 22 (MKTWHMVVVIGFLATLAQTSLA). 4 disulfides stabilise this stretch: Cys28-Cys114, Cys31-Cys103, Cys61-Cys72, and Cys148-Cys151.

The protein belongs to the ARMET family.

Its subcellular location is the secreted. In terms of biological role, required during the maturation of the embryonic nervous system for maintenance of neuronal and cuticular connectivity. Essential for maintenance of dopaminergic neurons and dopamine levels. This Drosophila sechellia (Fruit fly) protein is Mesencephalic astrocyte-derived neurotrophic factor homolog.